The sequence spans 60 residues: Large ribosomal subunit protein uL30 (60 aa).

This sequence belongs to the universal ribosomal protein uL30 family. Part of the 50S ribosomal subunit.

The polypeptide is Large ribosomal subunit protein uL30 (Desulfitobacterium hafniense (strain DSM 10664 / DCB-2)).